The following is a 63-amino-acid chain: Large ribosomal subunit protein uL29 (63 aa).

This sequence belongs to the universal ribosomal protein uL29 family.

In Yersinia pseudotuberculosis serotype O:1b (strain IP 31758), this protein is Large ribosomal subunit protein uL29.